Here is a 122-residue protein sequence, read N- to C-terminus: Large ribosomal subunit protein bL12 (122 aa).

Belongs to the bacterial ribosomal protein bL12 family. As to quaternary structure, homodimer. Part of the ribosomal stalk of the 50S ribosomal subunit. Forms a multimeric L10(L12)X complex, where L10 forms an elongated spine to which 2 to 4 L12 dimers bind in a sequential fashion. Binds GTP-bound translation factors.

In terms of biological role, forms part of the ribosomal stalk which helps the ribosome interact with GTP-bound translation factors. Is thus essential for accurate translation. The protein is Large ribosomal subunit protein bL12 of Xanthomonas oryzae pv. oryzae (strain MAFF 311018).